Here is a 393-residue protein sequence, read N- to C-terminus: Short-chain dehydrogenase/reductase family 42E member 1 (393 aa).

The active-site Proton acceptor is the tyrosine 152. Lysine 156 serves as a coordination point for NAD(+). Transmembrane regions (helical) follow at residues 282-302 and 371-391; these read LPLTLVYCFAFLTEMVHFILG and GLLVFLLIIAVLMWLPSSVIL.

Belongs to the 3-beta-HSD family.

The protein resides in the membrane. The chain is Short-chain dehydrogenase/reductase family 42E member 1 (SDR42E1) from Homo sapiens (Human).